The following is a 358-amino-acid chain: Putative ZDHHC-type palmitoyltransferase 4 (358 aa).

4 consecutive transmembrane segments (helical) span residues 28–48 (FVGFATSLITLIAITYFTIIF), 57–77 (LFFIFNFFCDLSISLFLTYGI), 171–191 (YFFLFLSYLWVSVCYVLAHSL), and 210–230 (LLVIISSIGSFITFVAVGSFG). One can recognise a DHHC domain in the interval 127 to 177 (SYCKKCSKAKPPRCHHCSVCDKCVLKMDHHCPWIGGCVGFYNYRYFFLFLS). Residues Asn255 and Asn296 are each glycosylated (N-linked (GlcNAc...) asparagine). The interval 302–358 (NNKNNENNENNENNEIDNHNNNNNNNNNNNNNEKEDNINENDNLISYDTDEYNRHKK) is disordered. The segment covering 305 to 332 (NNENNENNENNEIDNHNNNNNNNNNNNN) has biased composition (low complexity).

This sequence belongs to the DHHC palmitoyltransferase family.

It localises to the membrane. It catalyses the reaction L-cysteinyl-[protein] + hexadecanoyl-CoA = S-hexadecanoyl-L-cysteinyl-[protein] + CoA. This chain is Putative ZDHHC-type palmitoyltransferase 4, found in Dictyostelium discoideum (Social amoeba).